A 172-amino-acid chain; its full sequence is Large ribosomal subunit protein uL10 (172 aa).

Belongs to the universal ribosomal protein uL10 family. Part of the ribosomal stalk of the 50S ribosomal subunit. The N-terminus interacts with L11 and the large rRNA to form the base of the stalk. The C-terminus forms an elongated spine to which L12 dimers bind in a sequential fashion forming a multimeric L10(L12)X complex.

In terms of biological role, forms part of the ribosomal stalk, playing a central role in the interaction of the ribosome with GTP-bound translation factors. The chain is Large ribosomal subunit protein uL10 from Rhizobium etli (strain ATCC 51251 / DSM 11541 / JCM 21823 / NBRC 15573 / CFN 42).